Reading from the N-terminus, the 293-residue chain is Heterogeneous nuclear ribonucleoprotein D-like-A (293 aa).

The segment at 1–21 (MAGFGAAPDFNEGSKINASKN) is disordered. 2 consecutive RRM domains span residues 26–108 (GKMF…KGKE) and 111–188 (KKVF…AAQP). 2 disordered regions span residues 193–224 (RQQQ…GWNQ) and 274–293 (QSTY…YQPY). The span at 202-222 (GGRGAVTGRGGTRGRGRGQGW) shows a compositional bias: gly residues.

The protein resides in the nucleus. The protein localises to the cytoplasm. Its function is as follows. Acts as a transcriptional regulator. Binds DNA and RNA. The sequence is that of Heterogeneous nuclear ribonucleoprotein D-like-A (hnrnpdl-a) from Xenopus laevis (African clawed frog).